The primary structure comprises 230 residues: 5'-methylthioadenosine/S-adenosylhomocysteine nucleosidase (230 aa).

The active-site Proton acceptor is the glutamate 12. Substrate is bound by residues glycine 78, methionine 153, and 174–175; that span reads ME. Residue aspartate 198 is the Proton donor of the active site.

This sequence belongs to the PNP/UDP phosphorylase family. MtnN subfamily.

The enzyme catalyses S-adenosyl-L-homocysteine + H2O = S-(5-deoxy-D-ribos-5-yl)-L-homocysteine + adenine. It carries out the reaction S-methyl-5'-thioadenosine + H2O = 5-(methylsulfanyl)-D-ribose + adenine. The catalysed reaction is 5'-deoxyadenosine + H2O = 5-deoxy-D-ribose + adenine. It participates in amino-acid biosynthesis; L-methionine biosynthesis via salvage pathway; S-methyl-5-thio-alpha-D-ribose 1-phosphate from S-methyl-5'-thioadenosine (hydrolase route): step 1/2. Functionally, catalyzes the irreversible cleavage of the glycosidic bond in both 5'-methylthioadenosine (MTA) and S-adenosylhomocysteine (SAH/AdoHcy) to adenine and the corresponding thioribose, 5'-methylthioribose and S-ribosylhomocysteine, respectively. Also cleaves 5'-deoxyadenosine, a toxic by-product of radical S-adenosylmethionine (SAM) enzymes, into 5-deoxyribose and adenine. This is 5'-methylthioadenosine/S-adenosylhomocysteine nucleosidase from Tolumonas auensis (strain DSM 9187 / NBRC 110442 / TA 4).